The primary structure comprises 205 residues: Protein-L-isoaspartate O-methyltransferase (205 aa).

Serine 56 is a catalytic residue.

This sequence belongs to the methyltransferase superfamily. L-isoaspartyl/D-aspartyl protein methyltransferase family.

It is found in the cytoplasm. The catalysed reaction is [protein]-L-isoaspartate + S-adenosyl-L-methionine = [protein]-L-isoaspartate alpha-methyl ester + S-adenosyl-L-homocysteine. Catalyzes the methyl esterification of L-isoaspartyl residues in peptides and proteins that result from spontaneous decomposition of normal L-aspartyl and L-asparaginyl residues. It plays a role in the repair and/or degradation of damaged proteins. This chain is Protein-L-isoaspartate O-methyltransferase, found in Pyrobaculum arsenaticum (strain DSM 13514 / JCM 11321 / PZ6).